The primary structure comprises 348 residues: 4-hydroxy-2-oxovalerate aldolase 2 (348 aa).

In terms of domain architecture, Pyruvate carboxyltransferase spans leucine 5–leucine 256. A substrate-binding site is contributed by arginine 13–aspartate 14. Aspartate 14 lines the Mn(2+) pocket. Histidine 17 (proton acceptor) is an active-site residue. Residues serine 168 and histidine 195 each coordinate substrate. Mn(2+) is bound by residues histidine 195 and histidine 197.

The protein belongs to the 4-hydroxy-2-oxovalerate aldolase family.

It catalyses the reaction (S)-4-hydroxy-2-oxopentanoate = acetaldehyde + pyruvate. This Salinispora arenicola (strain CNS-205) protein is 4-hydroxy-2-oxovalerate aldolase 2.